Reading from the N-terminus, the 798-residue chain is Vacuolar protein sorting-associated protein 53 homolog (798 aa).

The protein belongs to the VPS53 family. Component of the Golgi-associated retrograde protein (GARP) complex, also called VFT (VPS fifty-three) complex, composed of vps-51, vps-52, vps-53 and vps-54. Within the complex interacts with vps-51, vps-52 and vps-54. Ubiquitously expressed, with particularly strong expression in neuronal cells. Specifically expressed in head and tail neurons and in the pharynx and ventral cord motor neurons.

It is found in the golgi apparatus. The protein localises to the trans-Golgi network membrane. Its subcellular location is the endosome membrane. It localises to the perikaryon. The protein resides in the cytoplasm. It is found in the perinuclear region. Acts as a component of the GARP complex that is involved in retrograde transport from early and late endosomes to the trans-Golgi network (TGN). The GARP complex facilitates tethering as well as SNARE complex assembly at the Golgi. Plays a role in the trafficking of cargo to dense-core vesicles, probably through association with the EARP-interacting protein eipr-1. Important for neuronal function. This chain is Vacuolar protein sorting-associated protein 53 homolog, found in Caenorhabditis elegans.